The sequence spans 339 residues: Protein FAM50A (339 aa).

The segment at 1–31 (MAQYKGAASEAGRAMHLMKKREKQREQMEQM) is disordered. The residue at position 2 (A2) is an N-acetylalanine. Residue K100 forms a Glycyl lysine isopeptide (Lys-Gly) (interchain with G-Cter in SUMO2) linkage. The disordered stretch occupies residues 121 to 177 (SFTLEEEEEGGEEEEEAAMYEEEMEREEITTKKRKLGKNPDVDTSFLPDRDREEEEN). Residues 124–146 (LEEEEEGGEEEEEAAMYEEEMER) are compositionally biased toward acidic residues. Residues 152–155 (KKRK) carry the Nuclear localization signal motif. Basic and acidic residues predominate over residues 168 to 177 (PDRDREEEEN).

The protein belongs to the FAM50 family. As to quaternary structure, interacts with EFTUD2, a component of the spliceosome U5 complex. Interacts with DDX41, a component of the spliceosome C complex. Widely expressed in fetal and adult tissues. Mostly abundant in fetal brain, liver and kidney; in the adult, high levels were also observed in heart, skeletal muscle, spleen, thymus, prostate and small intestine. Expressed in fetal cerebellum and hypothalamus. Low expression is observed in fetal temporal lobe.

The protein resides in the nucleus. Functionally, probably involved in the regulation of pre-mRNA splicing. The chain is Protein FAM50A (FAM50A) from Homo sapiens (Human).